The sequence spans 259 residues: Protein CWC15 homolog (259 aa).

The tract at residues 1–182 (MTTAARPTFD…EKKQEDERIR (182 aa)) is disordered. Basic and acidic residues predominate over residues 52–71 (DENRNRDFRKELEEREREAR). 2 stretches are compositionally biased toward low complexity: residues 72 to 82 (SGTGATSSSSG) and 114 to 126 (QQQA…QQAA). The span at 129–150 (DADEPLDNDSSDSDSDSDDDDA) shows a compositional bias: acidic residues. The stretch at 150-182 (AALLAELQKIKQERLQETARRESEKKQEDERIR) forms a coiled coil. The span at 157–182 (QKIKQERLQETARRESEKKQEDERIR) shows a compositional bias: basic and acidic residues.

It belongs to the CWC15 family.

Involved in pre-mRNA splicing. The polypeptide is Protein CWC15 homolog (c12.1) (Drosophila melanogaster (Fruit fly)).